The following is a 1382-amino-acid chain: Hepatocyte growth factor receptor (1382 aa).

The first 24 residues, 1–24 (MKPPTVHIPGIVVLLFTLVQRSSE), serve as a signal peptide directing secretion. Topologically, residues 25 to 933 (ECREALRRSG…VIVLPDQNFT (909 aa)) are extracellular. Residues 27–516 (REALRRSGTD…TGKKITKIPL (490 aa)) enclose the Sema domain. Residues N38, N49, and N99 are each glycosylated (N-linked (GlcNAc...) asparagine). Intrachain disulfides connect C94-C100, C97-C160, C133-C141, and C173-C176. 2 N-linked (GlcNAc...) asparagine glycosylation sites follow: N203 and N359. 2 cysteine pairs are disulfide-bonded: C299-C364 and C386-C398. 4 N-linked (GlcNAc...) asparagine glycosylation sites follow: N400, N406, N450, and N495. Disulfide bonds link C521/C539, C527/C562, C530/C546, and C542/C552. 3 IPT/TIG domains span residues 564–656 (PTIF…FSYV), 658–740 (PKIT…FIYK), and 743–837 (PVIH…LIYV). O-linked (Man) threonine glycosylation is present at T583. N-linked (GlcNAc...) asparagine glycans are attached at residues N608, N616, and N636. Residues T677 and T762 are each glycosylated (O-linked (Man) threonine). Residues N769, N786, N880, and N931 are each glycosylated (N-linked (GlcNAc...) asparagine). The chain crosses the membrane as a helical span at residues 934–956 (GLIAGVASISVLLLLFLGLFLWM). Topologically, residues 957 to 1382 (KKKKQIKDLG…QDAPDRVVDT (426 aa)) are cytoplasmic. At S967 the chain carries Phosphoserine. T978 carries the post-translational modification Phosphothreonine. Phosphoserine is present on residues S991, S998, and S1001. The residue at position 1004 (Y1004) is a Phosphotyrosine. Residues 1079-1346 (VHFTEIIGRG…KIAVIFSTFI (268 aa)) enclose the Protein kinase domain. ATP contacts are provided by residues 1085–1093 (IGRGHFGCV) and K1111. The active-site Proton acceptor is the D1205. The segment at 1213–1382 (LDEKFTVKVA…QDAPDRVVDT (170 aa)) is interaction with RANBP9. At Y1231 the chain carries Phosphotyrosine. Phosphotyrosine; by autocatalysis is present on residues Y1235 and Y1236. T1290 carries the phosphothreonine modification. The segment at 1321–1360 (WHPNAEMRPSFSELVSKIAVIFSTFIGEHYVHVNATYVNV) is interaction with MUC20. Y1350 and Y1357 each carry phosphotyrosine; by autocatalysis. Position 1366 is a phosphotyrosine (Y1366).

This sequence belongs to the protein kinase superfamily. Tyr protein kinase family. Heterodimer made of an alpha chain (50 kDa) and a beta chain (145 kDa) which are disulfide linked. Binds PLXNB1. Interacts when phosphorylated with downstream effectors including STAT3, PIK3R1, SRC, PCLG1, GRB2 and GAB1. Interacts with SPSB1, SPSB2 and SPSB4. Interacts with INPP5D/SHIP1. When phosphorylated at Tyr-1357, interacts with INPPL1/SHIP2. Interacts with RANBP9 and RANBP10, as well as SPSB1, SPSB2, SPSB3 and SPSB4. SPSB1 binding occurs in the presence and in the absence of HGF, however HGF treatment has a positive effect on this interaction. Interacts with MUC20; prevents interaction with GRB2 and suppresses hepatocyte growth factor-induced cell proliferation. Interacts with GRB10. Interacts with PTPN1 and PTPN2. Interacts with HSP90AA1 and HSP90AB1; the interaction suppresses MET kinase activity. Interacts with tensin TNS3. Interacts (when phosphorylated) with tensin TNS4 (via SH2 domain); the interaction increases MET protein stability by inhibiting MET endocytosis and subsequent lysosomal degradation. In terms of processing, autophosphorylated in response to ligand binding on Tyr-1235 and Tyr-1236 in the kinase domain leading to further phosphorylation of Tyr-1350 and Tyr-1357 in the C-terminal multifunctional docking site. Dephosphorylated by PTPRJ at Tyr-1350 and Tyr-1366. Dephosphorylated by PTPN1 and PTPN2. Ubiquitinated. Ubiquitination by CBL regulates the receptor stability and activity through proteasomal degradation. Post-translationally, O-mannosylation of IPT/TIG domains by TMEM260 is required for protein maturation. O-mannosylated residues are composed of single mannose glycans that are not elongated or modified.

The protein localises to the membrane. It carries out the reaction L-tyrosyl-[protein] + ATP = O-phospho-L-tyrosyl-[protein] + ADP + H(+). Its activity is regulated as follows. In its inactive state, the C-terminal tail interacts with the catalytic domain and inhibits the kinase activity. Upon ligand binding, the C-terminal tail is displaced and becomes phosphorylated, thus increasing the kinase activity. Receptor tyrosine kinase that transduces signals from the extracellular matrix into the cytoplasm by binding to hepatocyte growth factor/HGF ligand. Regulates many physiological processes including proliferation, scattering, morphogenesis and survival. Ligand binding at the cell surface induces autophosphorylation of MET on its intracellular domain that provides docking sites for downstream signaling molecules. Following activation by ligand, interacts with the PI3-kinase subunit PIK3R1, PLCG1, SRC, GRB2, STAT3 or the adapter GAB1. Recruitment of these downstream effectors by MET leads to the activation of several signaling cascades including the RAS-ERK, PI3 kinase-AKT, or PLCgamma-PKC. The RAS-ERK activation is associated with the morphogenetic effects while PI3K/AKT coordinates prosurvival effects. During embryonic development, MET signaling plays a role in gastrulation, development and migration of muscles and neuronal precursors, angiogenesis and kidney formation. In adults, participates in wound healing as well as organ regeneration and tissue remodeling. Also promotes differentiation and proliferation of hematopoietic cells. The chain is Hepatocyte growth factor receptor (MET) from Ornithorhynchus anatinus (Duckbill platypus).